Reading from the N-terminus, the 280-residue chain is Tryptophan 2,3-dioxygenase (280 aa).

Substrate contacts are provided by residues 49–53, Tyr-111, and Arg-115; that span reads FIIIH. A heme-binding site is contributed by His-238. Thr-252 lines the substrate pocket.

This sequence belongs to the tryptophan 2,3-dioxygenase family. In terms of assembly, homotetramer. It depends on heme as a cofactor.

It catalyses the reaction L-tryptophan + O2 = N-formyl-L-kynurenine. The protein operates within amino-acid degradation; L-tryptophan degradation via kynurenine pathway; L-kynurenine from L-tryptophan: step 1/2. Its function is as follows. Heme-dependent dioxygenase that catalyzes the oxidative cleavage of the L-tryptophan (L-Trp) pyrrole ring and converts L-tryptophan to N-formyl-L-kynurenine. Catalyzes the oxidative cleavage of the indole moiety. The protein is Tryptophan 2,3-dioxygenase of Geobacillus thermodenitrificans (strain NG80-2).